The sequence spans 555 residues: Potassium-transporting ATPase potassium-binding subunit (555 aa).

Helical transmembrane passes span Ile-2–Ile-22, Gln-60–Phe-80, Ile-130–Phe-150, Val-173–Thr-193, Met-246–Tyr-266, Ile-278–Glu-298, Ala-374–Val-394, Leu-412–Leu-432, Leu-483–Leu-503, and Gly-525–Leu-545.

The protein belongs to the KdpA family. As to quaternary structure, the system is composed of three essential subunits: KdpA, KdpB and KdpC.

Its subcellular location is the cell membrane. Functionally, part of the high-affinity ATP-driven potassium transport (or Kdp) system, which catalyzes the hydrolysis of ATP coupled with the electrogenic transport of potassium into the cytoplasm. This subunit binds the extracellular potassium ions and delivers the ions to the membrane domain of KdpB through an intramembrane tunnel. This chain is Potassium-transporting ATPase potassium-binding subunit, found in Bacillus thuringiensis subsp. konkukian (strain 97-27).